A 466-amino-acid polypeptide reads, in one-letter code: GTPase Der (466 aa).

EngA-type G domains follow at residues 30-193 (PVVA…PEVS) and 203-376 (RRVA…ASWD). Residues 36–43 (GRPNVGKS), 83–87 (DTGGW), 145–148 (NKVD), 209–216 (GKPNVGKS), 256–260 (DTAGL), and 321–324 (NKWD) contribute to the GTP site. Residues 377–459 (TRIATGPLNS…PIRINVRVRE (83 aa)) enclose the KH-like domain.

It belongs to the TRAFAC class TrmE-Era-EngA-EngB-Septin-like GTPase superfamily. EngA (Der) GTPase family. In terms of assembly, associates with the 50S ribosomal subunit.

In terms of biological role, GTPase that plays an essential role in the late steps of ribosome biogenesis. In Mycolicibacterium paratuberculosis (strain ATCC BAA-968 / K-10) (Mycobacterium paratuberculosis), this protein is GTPase Der.